A 139-amino-acid polypeptide reads, in one-letter code: Large-conductance mechanosensitive channel (139 aa).

2 helical membrane passes run 9-29 (AFAVKGNVVDMAVGIIIGAAF) and 79-99 (IQSVIDFVIVAFAIFMGVKAI).

It belongs to the MscL family. In terms of assembly, homopentamer.

It localises to the cell inner membrane. Functionally, channel that opens in response to stretch forces in the membrane lipid bilayer. May participate in the regulation of osmotic pressure changes within the cell. The polypeptide is Large-conductance mechanosensitive channel (Pseudomonas fluorescens (strain SBW25)).